Consider the following 494-residue polypeptide: Probable cytochrome P450 518A1 (494 aa).

Residues 1–21 form a helical membrane-spanning segment; sequence MSILIILIISIIFYLIFDFLY. Cysteine 438 lines the heme pocket.

It belongs to the cytochrome P450 family. The cofactor is heme.

The protein localises to the membrane. This is Probable cytochrome P450 518A1 (cyp518A1) from Dictyostelium discoideum (Social amoeba).